The chain runs to 545 residues: Probable zinc metalloprotease EGY2, chloroplastic (545 aa).

The N-terminal 63 residues, 1–63 (MQLPAMSCSP…QIRNRRFVCQ (63 aa)), are a transit peptide targeting the chloroplast. The tract at residues 66 to 142 (TETEPDGDGN…DATPASDAQE (77 aa)) is disordered. Acidic residues predominate over residues 68-85 (TEPDGDGNGDEEKEELGD). 2 stretches are compositionally biased toward polar residues: residues 88–109 (SSPS…TNAD) and 117–129 (NTEP…TVQN). 7 helical membrane passes run 256–276 (AVPE…TLLL), 300–320 (VYGA…HILA), 325–345 (GIKL…FGAI), 363–383 (AAGP…GFIL), 426–446 (PLVL…IPAG), 473–493 (LLGI…LIFF), and 513–533 (YISI…PYPF).

This sequence belongs to the peptidase M50B family.

Its subcellular location is the plastid. It localises to the chloroplast membrane. Its function is as follows. Probable membrane-associated metalloprotease that may be involved in chloroplast development. This is Probable zinc metalloprotease EGY2, chloroplastic (EGY2) from Oryza sativa subsp. indica (Rice).